The sequence spans 153 residues: Endoribonuclease YbeY (153 aa).

Positions 118, 122, and 128 each coordinate Zn(2+).

Belongs to the endoribonuclease YbeY family. Requires Zn(2+) as cofactor.

The protein resides in the cytoplasm. Its function is as follows. Single strand-specific metallo-endoribonuclease involved in late-stage 70S ribosome quality control and in maturation of the 3' terminus of the 16S rRNA. In Staphylococcus carnosus (strain TM300), this protein is Endoribonuclease YbeY.